Consider the following 237-residue polypeptide: Sugar fermentation stimulation protein homolog (237 aa).

The protein belongs to the SfsA family.

In Pseudomonas savastanoi pv. phaseolicola (strain 1448A / Race 6) (Pseudomonas syringae pv. phaseolicola (strain 1448A / Race 6)), this protein is Sugar fermentation stimulation protein homolog.